A 241-amino-acid chain; its full sequence is Major microneme antigen (241 aa).

A signal peptide spans 1 to 34 (MTLPIHFPRCVLYGMASAVWSILFLHILVGDTMS). Residues 35-103 (AADALSWSGG…ATGRGPSFVH (69 aa)) constitute a propeptide that is removed on maturation. Residues 64-83 (GKELEQQHGGEEQQMQRDTK) are compositionally biased toward basic and acidic residues. Residues 64 to 90 (GKELEQQHGGEEQQMQRDTKPAAFSNP) are disordered. PAN domains are found at residues 112–181 (CFPH…PRSC) and 185–241 (CTDN…VERA). 6 disulfides stabilise this stretch: C112-C181, C137-C159, C141-C147, C185-C189, C210-C230, and C214-C220. S121 provides a ligand contact to a carbohydrate. 3 residues coordinate a carbohydrate: K162, Y169, and D174.

Belongs to the microneme antigen family. As to quaternary structure, homodimer or heterodimer of major microneme antigen and microneme antigen. Post-translationally, contains six disulfide bonds.

It is found in the cytoplasmic vesicle. It localises to the secretory vesicle. The protein localises to the microneme. Its function is as follows. Galactose-binding lectin. Plays a role in adhesion to the host cell. Has a potential role in invasion of host cells. This is Major microneme antigen from Sarcocystis muris.